Reading from the N-terminus, the 126-residue chain is Calcitonin receptor-stimulating peptide 1 (126 aa).

The signal sequence occupies residues 1–25 (MGFWKFPPFLVLSILVLYQAGMFHT). A propeptide spanning residues 26-78 (APMRSAFGSPFDPATLSEEESRLLLAAMVNDYEQMKAREMQKQRAQGSGISVQ) is cleaved from the precursor. A disulfide bridge links Cys82 with Cys87. Gly118 is modified (glycine amide). The propeptide occupies 123–126 (NFWI).

In terms of tissue distribution, mainly expressed in the thyroid gland and CNS. Found in the nerve cells of cerebrum, hippocampus, hypothalamus, pons/midbrain and thalamus.

It is found in the secreted. In terms of biological role, stimulates cAMP production in porcine kidney cell line LLC-PK1 via the calcitonin receptor (CT) but not via the CT-like (CL) receptor. In Sus scrofa (Pig), this protein is Calcitonin receptor-stimulating peptide 1 (CRSP1).